Consider the following 361-residue polypeptide: Ribosomal RNA large subunit methyltransferase M (361 aa).

S-adenosyl-L-methionine-binding positions include S187, 220 to 223, D239, D259, and D276; that span reads CPGG. Residue K305 is the Proton acceptor of the active site.

The protein belongs to the class I-like SAM-binding methyltransferase superfamily. RNA methyltransferase RlmE family. RlmM subfamily. As to quaternary structure, monomer.

The protein resides in the cytoplasm. It catalyses the reaction cytidine(2498) in 23S rRNA + S-adenosyl-L-methionine = 2'-O-methylcytidine(2498) in 23S rRNA + S-adenosyl-L-homocysteine + H(+). Its function is as follows. Catalyzes the 2'-O-methylation at nucleotide C2498 in 23S rRNA. This chain is Ribosomal RNA large subunit methyltransferase M, found in Shewanella sp. (strain MR-7).